A 332-amino-acid polypeptide reads, in one-letter code: MHLIEKIYKNTREVVTREDAERLEGKSDIKSYIGIEPSGIPHIATAVMWPRKLAEIQDDIKVTVLLADWHAMINNKLHGDLDLIRKGGEILRKTFQAEGLTKADYVWASDLVDSSEYWRMFIDTAKRSTLKRVIRSLPIMGRNETDAEKDFSMYLYPIMQVTDIFYLDVDMAFGGMDQRHAHMLARDIAEKMKRKKVVSVHGFLLSSLKGNARMDNFVKMSKSDPNSAILVTDHMEDIERKINAAYCPPQQVEGNPVAEIMKYIIIPYYGKSIEIHGSNGVINLDSVENFDQAYQRGEIQPADLKHKVATILNEMVEPARRSLEGLDLSEFQ.

5 residues coordinate L-tyrosine: Tyr-32, Tyr-156, Gln-160, Asp-163, and Gln-178. The 'KMSKS' region signature appears at 219-223; the sequence is KMSKS. Position 222 (Lys-222) interacts with ATP.

This sequence belongs to the class-I aminoacyl-tRNA synthetase family. TyrS type 4 subfamily. In terms of assembly, homodimer.

Its subcellular location is the cytoplasm. It carries out the reaction tRNA(Tyr) + L-tyrosine + ATP = L-tyrosyl-tRNA(Tyr) + AMP + diphosphate + H(+). Functionally, catalyzes the attachment of tyrosine to tRNA(Tyr) in a two-step reaction: tyrosine is first activated by ATP to form Tyr-AMP and then transferred to the acceptor end of tRNA(Tyr). The polypeptide is Tyrosine--tRNA ligase (Thermoplasma acidophilum (strain ATCC 25905 / DSM 1728 / JCM 9062 / NBRC 15155 / AMRC-C165)).